Here is a 481-residue protein sequence, read N- to C-terminus: MSYIKKLRARLDSGEVTAVELTKQYLAKIKDQDKSINSVITLCEAEALKEAENADAIISAGKQSLLTGIPILHKDLFCTKGIKTTAASKMLDNFVAPYDSTVTKNCKDQGMVTLGKLNMDEFAMGSTNEHSYYGAVSNPWDLDRVPGGSSGGSAAAVAAGFAPVSTGSDTGGSVRQPASFCGLTAMKPTYGSTSRFGMVAFASSFDQAGIFGHYAEDVAIMLDAISGECQYDSTCVGVKENHFTQDLEKDISGKVIGIDESLIKDLPAQIQEAVSKTLDNFKKLGAEIKSVKVPDLKEALSTYYIITPAEAAANLARYDGIRYGYRNPEARDLDELYRKSRTDGFGEEVKRRIMIGNYVLASSQYDSYYNKAQQLRKVMTDQINQIFEQVDVIFMPAAPSEAFKKGDKLDPVSAYLSDIYTIPANISGLPAIAFPIGFANDLPVGGQFMAKAFNDNVLTQMVTQYQNSYGIEEFILEQARI.

Residues Lys74 and Ser149 each act as charge relay system in the active site. Ser173 (acyl-ester intermediate) is an active-site residue.

It belongs to the amidase family. GatA subfamily. As to quaternary structure, heterotrimer of A, B and C subunits.

The catalysed reaction is L-glutamyl-tRNA(Gln) + L-glutamine + ATP + H2O = L-glutaminyl-tRNA(Gln) + L-glutamate + ADP + phosphate + H(+). Its function is as follows. Allows the formation of correctly charged Gln-tRNA(Gln) through the transamidation of misacylated Glu-tRNA(Gln) in organisms which lack glutaminyl-tRNA synthetase. The reaction takes place in the presence of glutamine and ATP through an activated gamma-phospho-Glu-tRNA(Gln). This chain is Glutamyl-tRNA(Gln) amidotransferase subunit A, found in Francisella philomiragia subsp. philomiragia (strain ATCC 25017 / CCUG 19701 / FSC 153 / O#319-036).